Consider the following 548-residue polypeptide: Thermolysin (548 aa).

An N-terminal signal peptide occupies residues Met-1–Ala-28. The propeptide at Ser-29–Ser-232 is activation peptide. Residues Asp-289, Asp-291, Gln-293, and Asp-370 each contribute to the Ca(2+) site. His-374 contributes to the Zn(2+) binding site. Residue Glu-375 is part of the active site. Zn(2+) contacts are provided by His-378 and Glu-398. Residues Glu-409, Asn-415, Asp-417, Glu-419, Glu-422, Tyr-425, Thr-426, Ile-429, and Asp-432 each contribute to the Ca(2+) site. His-463 serves as the catalytic Proton donor.

This sequence belongs to the peptidase M4 family. The cofactor is Ca(2+). It depends on Zn(2+) as a cofactor.

It localises to the secreted. It catalyses the reaction Preferential cleavage: Xaa-|-Leu &gt; Xaa-|-Phe.. In terms of biological role, extracellular zinc metalloprotease. This is Thermolysin (npr) from Bacillus thermoproteolyticus.